A 48-amino-acid polypeptide reads, in one-letter code: ATP synthase protein 8 (48 aa).

A helical transmembrane segment spans residues 13–32 (LVYGFALVTILLVLFAQYFL).

Belongs to the ATPase protein 8 family. F-type ATPases have 2 components, CF(1) - the catalytic core - and CF(0) - the membrane proton channel.

It localises to the mitochondrion membrane. In terms of biological role, mitochondrial membrane ATP synthase (F(1)F(0) ATP synthase or Complex V) produces ATP from ADP in the presence of a proton gradient across the membrane which is generated by electron transport complexes of the respiratory chain. F-type ATPases consist of two structural domains, F(1) - containing the extramembraneous catalytic core and F(0) - containing the membrane proton channel, linked together by a central stalk and a peripheral stalk. During catalysis, ATP synthesis in the catalytic domain of F(1) is coupled via a rotary mechanism of the central stalk subunits to proton translocation. Part of the complex F(0) domain. Minor subunit located with subunit a in the membrane. The sequence is that of ATP synthase protein 8 (ATP8) from Kluyveromyces lactis (strain ATCC 8585 / CBS 2359 / DSM 70799 / NBRC 1267 / NRRL Y-1140 / WM37) (Yeast).